The following is a 563-amino-acid chain: MRFNAAITGALVSSATLMGQAHAEETEKKADATSLVEKPTFTPTTIEAPFLEQFTADWDSRWTPSHAKKEDSKSEEDWAYVGEWAVEEPTVLNGMVGDKGLVVKNVAAHHAISAKFPKKIDNKGKTLVVQYEVKPQNSLVCGGAYMKLLQENKKLHAEEFSNATPYVIMFGPDKCGATNKVHFIFRHKNPKTGEYEEKHMTAPPAARTTKLTTLYTLIVKPDQSFQILIDGEAVKNGTLLEDFAPPVNPEKEIDDPKDKKPADWVDEAKIPDPEAKKPDDWDEDAPYEIVDEEATMPEDWLEDEPTSIPDPEAEKPEDWDDEEDGDWIPPTVPNPKCNEVSGCGPWTPPMKKNPAYKGKWTAPLIDNPAYKGIWKPRKIPNPAYFEDKTPSNFEPMGAVGFEIWTMQNDILFDNIYIGHSIEDAEKLRKETFDLKHPVEVALEEASKPKLEEKAATPSVSFKEAPVTYVREKVDYFVGLAKQDPINAVKQVPEVAGGLGALLLTMILVIVGAVGASSPAPAAAAKKGKEAASAAKEKASEAVSSAADTAKGAATKRNTRSSAQ.

An N-terminal signal peptide occupies residues 1–23; the sequence is MRFNAAITGALVSSATLMGQAHA. The Lumenal portion of the chain corresponds to 24 to 493; sequence EETEKKADAT…PINAVKQVPE (470 aa). Residue aspartate 98 participates in Ca(2+) binding. Cysteine 141 and cysteine 175 are oxidised to a cystine. Tyrosine 145, lysine 147, tyrosine 166, and aspartate 173 together coordinate an alpha-D-glucoside. The N-linked (GlcNAc...) asparagine glycan is linked to asparagine 236. The disordered stretch occupies residues 241-323; that stretch reads EDFAPPVNPE…EKPEDWDDEE (83 aa). Residues 249–279 show a composition bias toward basic and acidic residues; sequence PEKEIDDPKDKKPADWVDEAKIPDPEAKKPD. The segment at 253–386 is p domain (Extended arm); the sequence is IDDPKDKKPA…RKIPNPAYFE (134 aa). Over residues 280–305 the composition is skewed to acidic residues; the sequence is DWDEDAPYEIVDEEATMPEDWLEDEP. Residues cysteine 337 and cysteine 343 are joined by a disulfide bond. Residue glutamate 402 coordinates an alpha-D-glucoside. A Ca(2+)-binding site is contributed by aspartate 413. Residues 494-514 form a helical membrane-spanning segment; it reads VAGGLGALLLTMILVIVGAVG. The Cytoplasmic segment spans residues 515–563; the sequence is ASSPAPAAAAKKGKEAASAAKEKASEAVSSAADTAKGAATKRNTRSSAQ. The interval 521 to 563 is disordered; it reads AAAAKKGKEAASAAKEKASEAVSSAADTAKGAATKRNTRSSAQ. Over residues 526 to 539 the composition is skewed to basic and acidic residues; that stretch reads KGKEAASAAKEKAS.

This sequence belongs to the calreticulin family.

It localises to the endoplasmic reticulum membrane. In terms of biological role, interacts with newly synthesized monoglucosylated glycoproteins in the endoplasmic reticulum. It may act in assisting protein assembly and/or in the retention within the ER of unassembled protein subunits. It seems to play a major role in the quality control apparatus of the ER by the retention of incorrectly folded proteins. This Aspergillus fumigatus (strain ATCC MYA-4609 / CBS 101355 / FGSC A1100 / Af293) (Neosartorya fumigata) protein is Calnexin homolog.